The chain runs to 121 residues: Small ribosomal subunit protein uS13 (121 aa).

Positions 94-121 are disordered; sequence GLPVRGQSSKTNARTVKGPRKTVANKKK. Over residues 110-121 the composition is skewed to basic residues; it reads KGPRKTVANKKK.

This sequence belongs to the universal ribosomal protein uS13 family. In terms of assembly, part of the 30S ribosomal subunit. Forms a loose heterodimer with protein S19. Forms two bridges to the 50S subunit in the 70S ribosome.

Located at the top of the head of the 30S subunit, it contacts several helices of the 16S rRNA. In the 70S ribosome it contacts the 23S rRNA (bridge B1a) and protein L5 of the 50S subunit (bridge B1b), connecting the 2 subunits; these bridges are implicated in subunit movement. Contacts the tRNAs in the A and P-sites. This chain is Small ribosomal subunit protein uS13, found in Mesoplasma florum (strain ATCC 33453 / NBRC 100688 / NCTC 11704 / L1) (Acholeplasma florum).